A 231-amino-acid chain; its full sequence is PIAGSMVLAAILLKLGGYGIIRMMQIFPTTKTDLFLPFIVLALWGAILANLTCLQQTDLKSLIAYSSISHMGLVVAAIIIQTPWGLSGAMALMIAHGFTSSALFCLANTTYERTHTRILILTRGFHNILPMTTTWWLMTNLMNIAIPPSMNFTGELLIMSALFNWCPATIIMLGLSMLITASYSLHMFLSTQMGPTLLNSQTEPMHSREHLLITLHLAPLLMISLKPELVI.

The next 6 helical transmembrane spans lie at 1–21 (PIAG…YGII), 34–54 (LFLP…LTCL), 63–85 (IAYS…TPWG), 89–111 (AMAL…NTTY), 128–148 (ILPM…AIPP), and 156–176 (LLIM…LGLS).

It belongs to the complex I subunit 4 family.

It is found in the mitochondrion membrane. The catalysed reaction is a ubiquinone + NADH + 5 H(+)(in) = a ubiquinol + NAD(+) + 4 H(+)(out). Functionally, core subunit of the mitochondrial membrane respiratory chain NADH dehydrogenase (Complex I) that is believed to belong to the minimal assembly required for catalysis. Complex I functions in the transfer of electrons from NADH to the respiratory chain. The immediate electron acceptor for the enzyme is believed to be ubiquinone. This chain is NADH-ubiquinone oxidoreductase chain 4 (MT-ND4), found in Crotalus concolor (Midget faded rattlesnake).